The sequence spans 354 residues: G-protein coupled receptor homolog US28 (354 aa).

The Extracellular segment spans residues 1 to 37; it reads MTPTTTTAELTTEFDYDEDATPCVFTDVLNQSKPVTL. Asn-30 carries N-linked (GlcNAc...) asparagine; by host glycosylation. The helical transmembrane segment at 38-58 threads the bilayer; sequence FLYGVVFLFGSIGNFLVIFTI. Residues 59-69 are Cytoplasmic-facing; the sequence is TWRRRIQCSGD. The chain crosses the membrane as a helical span at residues 70–90; sequence VYFINLAAADLLFVCTLPLWM. Topologically, residues 91–101 are extracellular; it reads QYLLDHNSLAS. A helical transmembrane segment spans residues 102 to 122; that stretch reads VPCTLLTACFYVAMFASLCFI. Over 123-145 the chain is Cytoplasmic; sequence TEIALDRYYAIVYMRYRPVKQAC. A helical transmembrane segment spans residues 146-166; the sequence is LFSIFWWIFAVIIAIPHFMVV. Residues 167–183 are Extracellular-facing; sequence TKKDNQCMTDYDYLEVS. A helical membrane pass occupies residues 184–204; sequence YPIILNVELMLGAFVIPLSVI. Over 205 to 228 the chain is Cytoplasmic; sequence SYCYYRISRIVAVSQSRHKGRIVR. A helical membrane pass occupies residues 229 to 249; that stretch reads VLIAVVLVFIIFWLPYHLTLF. Residues 250–273 lie on the Extracellular side of the membrane; it reads VDTLKLLKWISSSCEFERSLKRAL. Residues 274-294 traverse the membrane as a helical segment; sequence ILTESLAFCHCCLNPLLYVFV. The Cytoplasmic portion of the chain corresponds to 295–354; that stretch reads GTKFRQELHCLLAEFRQRLFSRDVSWYHSMSFSRRSSPSRRETSSDTLSDEVCRVSQIIP.

It belongs to the G-protein coupled receptor 1 family. In terms of assembly, interacts with host GPRASP1; this interaction targets US28 to lysosomes for degradation. Interacts with host CX3CL1/Fractalkine (via N-terminus). Interacts with host Gi alpha-1 subunit GNAI1; this interaction does not lead to the catalytic activation of Gi complex. Post-translationally, phosphorylated. High phosphorylation occurs concomitantly with receptor endocytosis and correlate with low receptor presence at the plasma membrane.

It localises to the host cell membrane. Functionally, binds to a great number of different CC-chemokines including CCL5/RANTES, CCL2/MCP-1, CCL3/MIP-1-alpha as well as CX3CL1/Fractalkine. Transduces signals resulting in the activation of MAP kinase signaling pathways and augmentation of intracellular calcium ion levels, leading to alterations in chemotactic behavior of vascular smooth muscle cells and macrophages. The US28 receptor also exhibits high levels of agonist-independent signaling activity and agonist-independent endocytosis. Interacts with the host Gi complex without activating it, thereby probably interfering with the chemokine-Gi signaling. May also function as a G protein sink to sequester G protein from the cell surface via internalization. Interacts with endogenous Gaq/11 subunits and thereby constitutively activates phospholipase C. This chain is G-protein coupled receptor homolog US28 (US28), found in Homo sapiens (Human).